Here is a 465-residue protein sequence, read N- to C-terminus: UDP-N-acetylmuramoylalanine--D-glutamate ligase (465 aa).

Residue 112 to 118 (GTDGKTT) participates in ATP binding.

This sequence belongs to the MurCDEF family.

Its subcellular location is the cytoplasm. The enzyme catalyses UDP-N-acetyl-alpha-D-muramoyl-L-alanine + D-glutamate + ATP = UDP-N-acetyl-alpha-D-muramoyl-L-alanyl-D-glutamate + ADP + phosphate + H(+). It participates in cell wall biogenesis; peptidoglycan biosynthesis. In terms of biological role, cell wall formation. Catalyzes the addition of glutamate to the nucleotide precursor UDP-N-acetylmuramoyl-L-alanine (UMA). The sequence is that of UDP-N-acetylmuramoylalanine--D-glutamate ligase from Chlorobium limicola (strain DSM 245 / NBRC 103803 / 6330).